Consider the following 481-residue polypeptide: Phosphoenolpyruvate phosphatase (481 aa).

Positions 1–36 (MPIYTSRSCFYLLLFHIILLCSVDKTLCRQTSSFVR) are cleaved as a signal peptide. Residue Asn109 is glycosylated (N-linked (GlcNAc...) asparagine). 3 residues coordinate Fe cation: Asp168, Asp195, and Tyr198. A Zn(2+)-binding site is contributed by Asp195. A glycan (N-linked (GlcNAc...) asparagine) is linked at Asn206. The Zn(2+) site is built by Asn232 and His317. Asn232 serves as a coordination point for substrate. The active-site Proton donor is the His327. Residue His354 coordinates Zn(2+). 354 to 356 (HVH) is a binding site for substrate. His356 serves as a coordination point for Fe cation. N-linked (GlcNAc...) asparagine glycosylation is found at Asn370 and Asn427.

This sequence belongs to the metallophosphoesterase superfamily. Purple acid phosphatase family.

Its subcellular location is the vacuole lumen. It catalyses the reaction phosphoenolpyruvate + H2O = pyruvate + phosphate. Functionally, phosphoenolpyruvate phosphatase that probably operates in the vacuole to release phosphate from phosphoenolpyruvate (PEP) under phosphorus starvation. This is Phosphoenolpyruvate phosphatase (ACPEPP) from Allium cepa (Onion).